Reading from the N-terminus, the 214-residue chain is Adenylate kinase (214 aa).

ATP is bound at residue 10 to 15 (GAGKGT). The NMP stretch occupies residues 30–59 (STGDMLRAAVKAGSELGLKAKEIMDAGKLV). Residues threonine 31, arginine 36, 57–59 (KLV), 85–88 (GFPR), and glutamine 92 each bind AMP. Residues 122–159 (GRRVHAASGRVYHVKFNPPKVEDKDDVTGEDLTIRKDD) form an LID region. ATP contacts are provided by residues arginine 123 and 132–133 (VY). The AMP site is built by arginine 156 and arginine 167. Position 200 (arginine 200) interacts with ATP.

This sequence belongs to the adenylate kinase family. Monomer.

It is found in the cytoplasm. The catalysed reaction is AMP + ATP = 2 ADP. It participates in purine metabolism; AMP biosynthesis via salvage pathway; AMP from ADP: step 1/1. In terms of biological role, catalyzes the reversible transfer of the terminal phosphate group between ATP and AMP. Plays an important role in cellular energy homeostasis and in adenine nucleotide metabolism. This Yersinia enterocolitica serotype O:8 / biotype 1B (strain NCTC 13174 / 8081) protein is Adenylate kinase.